The chain runs to 119 residues: Ribosome-binding factor A (119 aa).

It belongs to the RbfA family. Monomer. Binds 30S ribosomal subunits, but not 50S ribosomal subunits or 70S ribosomes.

The protein resides in the cytoplasm. Functionally, one of several proteins that assist in the late maturation steps of the functional core of the 30S ribosomal subunit. Associates with free 30S ribosomal subunits (but not with 30S subunits that are part of 70S ribosomes or polysomes). Required for efficient processing of 16S rRNA. May interact with the 5'-terminal helix region of 16S rRNA. The sequence is that of Ribosome-binding factor A from Chlorobium luteolum (strain DSM 273 / BCRC 81028 / 2530) (Pelodictyon luteolum).